A 626-amino-acid polypeptide reads, in one-letter code: Chaperone protein HtpG (626 aa).

Positions 1–339 (MSQNQETRGF…SNDLPLNVSR (339 aa)) are a; substrate-binding. The interval 340–555 (EILQDNKITA…NDQMTTQMAK (216 aa)) is b. Residues 556–626 (LFAAAGQPVP…FIKRINKLLG (71 aa)) form a c region.

This sequence belongs to the heat shock protein 90 family. Homodimer.

The protein resides in the cytoplasm. Molecular chaperone. Has ATPase activity. In Haemophilus influenzae (strain PittGG), this protein is Chaperone protein HtpG.